The following is a 458-amino-acid chain: Argininosuccinate lyase (458 aa).

It belongs to the lyase 1 family. Argininosuccinate lyase subfamily.

Its subcellular location is the cytoplasm. It catalyses the reaction 2-(N(omega)-L-arginino)succinate = fumarate + L-arginine. It participates in amino-acid biosynthesis; L-arginine biosynthesis; L-arginine from L-ornithine and carbamoyl phosphate: step 3/3. The protein is Argininosuccinate lyase of Neisseria meningitidis serogroup C / serotype 2a (strain ATCC 700532 / DSM 15464 / FAM18).